Here is a 382-residue protein sequence, read N- to C-terminus: MIOREX complex component 5 (382 aa).

The transit peptide at 1 to 12 directs the protein to the mitochondrion; sequence MRRTFSQLATRL.

As to quaternary structure, associates with the mitochondrial ribosome.

Its subcellular location is the mitochondrion. Functionally, component of MIOREX complexes, large expressome-like assemblies of ribosomes with factors involved in all the steps of post-transcriptional gene expression. The polypeptide is MIOREX complex component 5 (Saccharomyces cerevisiae (strain ATCC 204508 / S288c) (Baker's yeast)).